The primary structure comprises 342 residues: MACEPQVDPGATGPLPPSSPGWSALPGGSPPGWGQELHNGQVLTVLRIDNTCAPISFDLGAAEEQLQTWGIQVPADQYRSLAESALLEPQVRRYIIYNSRPMRLAFAVVFYVVVWANIYSTSQMFALGNHWAGMLLVTLAAVSLTLTLVLVFERHQKKANTNTDLRLAAANGALLRHRVLLGVTDTVEGCQSVIQLWFVYFDLENCVQFLSDHVQEMKTSQESLLRSRLSQLCVVMETGVSPATAEGPENLEDAPLLPGNSCPNERPLMQTELHQLVPEAEPEEMARQLLAVFGGYYIRLLVTSQLPQAMGTRHTNSPRIPCPCQLIEAYILGTGCCPFLAR.

Residues 1–30 are disordered; that stretch reads MACEPQVDPGATGPLPPSSPGWSALPGGSP. 2 helical membrane passes run 105-125 and 132-152; these read AFAV…SQMF and AGML…VLVF.

Interacts with ITGAM; this interaction inhibits ITGAM degradation via the endosome-lysosome pathway. Interacts with ITGB4; this interaction prevents ITGB4 degradation.

Its subcellular location is the cell membrane. In terms of biological role, stabilizes cell surface expression of ITGAM and participates in the adhesion and migration of phagocytes during bacterial clearance. This is Transmembrane protein 268 from Homo sapiens (Human).